The sequence spans 117 residues: Putative pterin-4-alpha-carbinolamine dehydratase (117 aa).

This sequence belongs to the pterin-4-alpha-carbinolamine dehydratase family.

It catalyses the reaction (4aS,6R)-4a-hydroxy-L-erythro-5,6,7,8-tetrahydrobiopterin = (6R)-L-erythro-6,7-dihydrobiopterin + H2O. This is Putative pterin-4-alpha-carbinolamine dehydratase from Colwellia psychrerythraea (strain 34H / ATCC BAA-681) (Vibrio psychroerythus).